A 452-amino-acid polypeptide reads, in one-letter code: Phosphoglucosamine mutase (452 aa).

The Phosphoserine intermediate role is filled by Ser112. Ser112, Asp251, Asp253, and Asp255 together coordinate Mg(2+). A Phosphoserine modification is found at Ser112.

It belongs to the phosphohexose mutase family. Requires Mg(2+) as cofactor. Post-translationally, activated by phosphorylation.

It carries out the reaction alpha-D-glucosamine 1-phosphate = D-glucosamine 6-phosphate. Catalyzes the conversion of glucosamine-6-phosphate to glucosamine-1-phosphate. The sequence is that of Phosphoglucosamine mutase from Bordetella bronchiseptica (strain ATCC BAA-588 / NCTC 13252 / RB50) (Alcaligenes bronchisepticus).